Here is a 360-residue protein sequence, read N- to C-terminus: Phospho-N-acetylmuramoyl-pentapeptide-transferase (360 aa).

10 helical membrane-spanning segments follow: residues 21–41 (YLTL…ILIG), 73–93 (TMGG…WADL), 97–117 (YVLV…VDDY), 134–154 (YFWQ…SATM), 168–188 (VFPQ…VGTS), 199–219 (GLAI…AYVT), 239–259 (LVIV…FNTY), 263–283 (VFMG…LAVL), 288–308 (LVLI…ILQV), and 338–358 (VIVR…ATLK).

This sequence belongs to the glycosyltransferase 4 family. MraY subfamily. Mg(2+) is required as a cofactor.

It is found in the cell inner membrane. The enzyme catalyses UDP-N-acetyl-alpha-D-muramoyl-L-alanyl-gamma-D-glutamyl-meso-2,6-diaminopimeloyl-D-alanyl-D-alanine + di-trans,octa-cis-undecaprenyl phosphate = di-trans,octa-cis-undecaprenyl diphospho-N-acetyl-alpha-D-muramoyl-L-alanyl-D-glutamyl-meso-2,6-diaminopimeloyl-D-alanyl-D-alanine + UMP. It participates in cell wall biogenesis; peptidoglycan biosynthesis. Functionally, catalyzes the initial step of the lipid cycle reactions in the biosynthesis of the cell wall peptidoglycan: transfers peptidoglycan precursor phospho-MurNAc-pentapeptide from UDP-MurNAc-pentapeptide onto the lipid carrier undecaprenyl phosphate, yielding undecaprenyl-pyrophosphoryl-MurNAc-pentapeptide, known as lipid I. The polypeptide is Phospho-N-acetylmuramoyl-pentapeptide-transferase (Alteromonas mediterranea (strain DSM 17117 / CIP 110805 / LMG 28347 / Deep ecotype)).